The chain runs to 309 residues: Porphobilinogen deaminase (309 aa).

Residue Cys241 is modified to S-(dipyrrolylmethanemethyl)cysteine.

This sequence belongs to the HMBS family. Monomer. It depends on dipyrromethane as a cofactor.

It catalyses the reaction 4 porphobilinogen + H2O = hydroxymethylbilane + 4 NH4(+). It participates in porphyrin-containing compound metabolism; protoporphyrin-IX biosynthesis; coproporphyrinogen-III from 5-aminolevulinate: step 2/4. Its function is as follows. Tetrapolymerization of the monopyrrole PBG into the hydroxymethylbilane pre-uroporphyrinogen in several discrete steps. The sequence is that of Porphobilinogen deaminase from Bacillus thuringiensis (strain Al Hakam).